Here is a 275-residue protein sequence, read N- to C-terminus: tRNA pseudouridine synthase A (275 aa).

Asp62 serves as the catalytic Nucleophile. Substrate is bound at residue Tyr124.

It belongs to the tRNA pseudouridine synthase TruA family. Homodimer.

The enzyme catalyses uridine(38/39/40) in tRNA = pseudouridine(38/39/40) in tRNA. Formation of pseudouridine at positions 38, 39 and 40 in the anticodon stem and loop of transfer RNAs. In Herminiimonas arsenicoxydans, this protein is tRNA pseudouridine synthase A.